Reading from the N-terminus, the 399-residue chain is Elongation factor Tu (399 aa).

The tr-type G domain maps to 10–209 (KPHVNIGTIG…EVDAYIPTPK (200 aa)). Residues 19 to 26 (GHVDHGKT) are G1. 19 to 26 (GHVDHGKT) is a GTP binding site. Position 26 (T26) interacts with Mg(2+). Residues 60–64 (GITIA) are G2. Residues 81–84 (DCPG) form a G3 region. Residues 81 to 85 (DCPGH) and 136 to 139 (NKQD) each bind GTP. Residues 136-139 (NKQD) are G4. A G5 region spans residues 174–176 (SAL).

Belongs to the TRAFAC class translation factor GTPase superfamily. Classic translation factor GTPase family. EF-Tu/EF-1A subfamily. As to quaternary structure, monomer.

Its subcellular location is the cytoplasm. It catalyses the reaction GTP + H2O = GDP + phosphate + H(+). In terms of biological role, GTP hydrolase that promotes the GTP-dependent binding of aminoacyl-tRNA to the A-site of ribosomes during protein biosynthesis. This is Elongation factor Tu from Helicobacter pylori (strain P12).